The chain runs to 685 residues: Galactocerebrosidase (685 aa).

An N-terminal signal peptide occupies residues 1-42 (MAEWLLSASRQRRVKAMTAAAGSAGRAAVPFLLCALLAPGGA). T109 provides a ligand contact to substrate. A glycan (N-linked (GlcNAc...) asparagine) is linked at N143. Substrate-binding residues include W151 and N197. Residue E198 is the Proton donor/acceptor of the active site. E274 (nucleophile) is an active-site residue. C287 and C394 are disulfide-bonded. Residue N379 is glycosylated (N-linked (GlcNAc...) asparagine). R396 lines the substrate pocket. N403, N451, N556, N559, and N602 each carry an N-linked (GlcNAc...) asparagine glycan.

It belongs to the glycosyl hydrolase 59 family.

It is found in the lysosome. It carries out the reaction a beta-D-galactosyl-(1&lt;-&gt;1')-N-acylsphing-4-enine + H2O = an N-acylsphing-4-enine + D-galactose. It catalyses the reaction beta-D-galactosyl-(1&lt;-&gt;1)-sphing-4-enine + H2O = sphing-4-enine + D-galactose. The enzyme catalyses a D-galactosylceramide + H2O = an N-acyl-sphingoid base + D-galactose. Hydrolyzes the galactose ester bonds of glycolipids such as galactosylceramide and galactosylsphingosine. Enzyme with very low activity responsible for the lysosomal catabolism of galactosylceramide, a major lipid in myelin, kidney and epithelial cells of small intestine and colon. The protein is Galactocerebrosidase of Macaca mulatta (Rhesus macaque).